Reading from the N-terminus, the 348-residue chain is Neutral peroxidase (348 aa).

The first 20 residues, 1–20, serve as a signal peptide directing secretion; the sequence is MASFVARLTLALSFIALALA. Positions 21-67 are excised as a propeptide; sequence GYSLVQNTLSSPTHTRLNLIPTWLDSTFDSADVLSYLGFGKSSGRLS. Cystine bridges form between Cys71-Cys149, Cys102-Cys107, Cys156-Cys344, and Cys235-Cys256. Residue His100 is the Proton acceptor of the active site. Residues Asp101, Val104, Gly106, and Asp108 each contribute to the Ca(2+) site. Asn114, Asn118, Asn173, Asn177, and Asn189 each carry an N-linked (GlcNAc...) asparagine glycan. Residue Pro198 participates in substrate binding. Asn203 is a glycosylation site (N-linked (GlcNAc...) asparagine). Residue His228 coordinates heme b. Thr229 is a binding site for Ca(2+). Asn247 and Asn261 each carry an N-linked (GlcNAc...) asparagine glycan. Ca(2+) is bound by residues Asp269, Ser271, and Asp276. A glycan (N-linked (GlcNAc...) asparagine) is linked at Asn300.

The protein belongs to the peroxidase family. Classical plant (class III) peroxidase subfamily. It depends on Ca(2+) as a cofactor. The cofactor is heme b. Highly expressed in suspension cultured cells. Weak expression also found in the stems of intact plants. No expression in leaf, tuberous root and non-tuberous root.

It is found in the secreted. The catalysed reaction is 2 a phenolic donor + H2O2 = 2 a phenolic radical donor + 2 H2O. Its function is as follows. Removal of H(2)O(2), oxidation of toxic reductants, biosynthesis and degradation of lignin, suberization, auxin catabolism, response to environmental stresses such as wounding, pathogen attack and oxidative stress. These functions might be dependent on each isozyme/isoform in each plant tissue. May contribute to protection against cold-induced oxidative stress. The protein is Neutral peroxidase of Ipomoea batatas (Sweet potato).